Consider the following 438-residue polypeptide: sn-glycerol-3-phosphate-binding periplasmic protein UgpB (438 aa).

Residues 1 to 23 (MKPLRYTASALALGLALMANAQA) form the signal peptide. Residues tyrosine 65, glutamate 89, serine 144, serine 270, glycine 307, tyrosine 346, and arginine 397 each coordinate sn-glycerol 3-phosphate.

This sequence belongs to the bacterial solute-binding protein 1 family. In terms of assembly, the complex is composed of two ATP-binding proteins (UgpC), two transmembrane proteins (UgpA and UgpE) and a solute-binding protein (UgpB).

The protein localises to the periplasm. In terms of biological role, part of the ABC transporter complex UgpBAEC involved in sn-glycerol-3-phosphate (G3P) import. Binds G3P. This Escherichia coli O1:K1 / APEC protein is sn-glycerol-3-phosphate-binding periplasmic protein UgpB (ugpB).